Reading from the N-terminus, the 163-residue chain is Large ribosomal subunit protein uL15 (163 aa).

Residues 1–43 (MKLNEIADNEGSRKKRTRVGRGIGSGKGKQSGRGGKGQTARSG) form a disordered region. Gly residues predominate over residues 21–37 (RGIGSGKGKQSGRGGKG).

This sequence belongs to the universal ribosomal protein uL15 family. As to quaternary structure, part of the 50S ribosomal subunit.

Functionally, binds to the 23S rRNA. The polypeptide is Large ribosomal subunit protein uL15 (Afipia carboxidovorans (strain ATCC 49405 / DSM 1227 / KCTC 32145 / OM5) (Oligotropha carboxidovorans)).